The following is a 125-amino-acid chain: Holo-[acyl-carrier-protein] synthase (125 aa).

Residues Asp9 and Glu58 each coordinate Mg(2+).

The protein belongs to the P-Pant transferase superfamily. AcpS family. Mg(2+) serves as cofactor.

It localises to the cytoplasm. The catalysed reaction is apo-[ACP] + CoA = holo-[ACP] + adenosine 3',5'-bisphosphate + H(+). In terms of biological role, transfers the 4'-phosphopantetheine moiety from coenzyme A to a Ser of acyl-carrier-protein. The sequence is that of Holo-[acyl-carrier-protein] synthase from Shewanella amazonensis (strain ATCC BAA-1098 / SB2B).